A 304-amino-acid chain; its full sequence is Probable intron-encoded endonuclease 1 (304 aa).

Positions 84-175 (DKGGIYSFIN…RFNFDNLYNF (92 aa)) constitute a GIY-YIG domain.

To endonucleases of group I introns of fungi and phage.

It is found in the mitochondrion. Mitochondrial DNA endonuclease involved in intron homing. The chain is Probable intron-encoded endonuclease 1 from Neurospora crassa (strain ATCC 24698 / 74-OR23-1A / CBS 708.71 / DSM 1257 / FGSC 987).